The primary structure comprises 255 residues: Taurine import ATP-binding protein TauB (255 aa).

The 228-residue stretch at Leu2–Ser229 folds into the ABC transporter domain. Residue Gly34–Thr41 coordinates ATP.

This sequence belongs to the ABC transporter superfamily. Taurine importer (TC 3.A.1.17.1) family. As to quaternary structure, the complex is composed of two ATP-binding proteins (TauB), two transmembrane proteins (TauC) and a solute-binding protein (TauA).

It is found in the cell inner membrane. It catalyses the reaction taurine(out) + ATP + H2O = taurine(in) + ADP + phosphate + H(+). In terms of biological role, part of the ABC transporter complex TauABC involved in taurine import. Responsible for energy coupling to the transport system. This Escherichia coli O157:H7 protein is Taurine import ATP-binding protein TauB.